A 689-amino-acid chain; its full sequence is DNA ligase (689 aa).

NAD(+)-binding positions include 40 to 44, 89 to 90, and Glu121; these read DSEYD and SL. The active-site N6-AMP-lysine intermediate is the Lys123. Arg144, Glu179, Lys295, and Lys319 together coordinate NAD(+). The Zn(2+) site is built by Cys413, Cys416, Cys431, and Cys437. Positions 610 to 689 constitute a BRCT domain; sequence REQSSLTDKI…EEWLTLIKNV (80 aa).

Belongs to the NAD-dependent DNA ligase family. LigA subfamily. Mg(2+) is required as a cofactor. Mn(2+) serves as cofactor.

It catalyses the reaction NAD(+) + (deoxyribonucleotide)n-3'-hydroxyl + 5'-phospho-(deoxyribonucleotide)m = (deoxyribonucleotide)n+m + AMP + beta-nicotinamide D-nucleotide.. In terms of biological role, DNA ligase that catalyzes the formation of phosphodiester linkages between 5'-phosphoryl and 3'-hydroxyl groups in double-stranded DNA using NAD as a coenzyme and as the energy source for the reaction. It is essential for DNA replication and repair of damaged DNA. This is DNA ligase from Rickettsia africae (strain ESF-5).